Reading from the N-terminus, the 413-residue chain is Putative competence-damage inducible protein (413 aa).

This sequence belongs to the CinA family.

The chain is Putative competence-damage inducible protein from Lacticaseibacillus paracasei (strain ATCC 334 / BCRC 17002 / CCUG 31169 / CIP 107868 / KCTC 3260 / NRRL B-441) (Lactobacillus paracasei).